A 201-amino-acid chain; its full sequence is Holliday junction branch migration complex subunit RuvA (201 aa).

The tract at residues 1-64 (MYAYIRGKLT…EDAQLLYGFI (64 aa)) is domain I. The domain II stretch occupies residues 65-143 (NEEEKDMFLS…ITRETTETLL (79 aa)). Residues 144-150 (SMNEENS) form a flexible linker region. Residues 151–201 (NSENLVKEALLALEALGYSKREISKVEKVLNKSTFDSVDEAVKLGLKTLVS) form a domain III region.

The protein belongs to the RuvA family. As to quaternary structure, homotetramer. Forms an RuvA(8)-RuvB(12)-Holliday junction (HJ) complex. HJ DNA is sandwiched between 2 RuvA tetramers; dsDNA enters through RuvA and exits via RuvB. An RuvB hexamer assembles on each DNA strand where it exits the tetramer. Each RuvB hexamer is contacted by two RuvA subunits (via domain III) on 2 adjacent RuvB subunits; this complex drives branch migration. In the full resolvosome a probable DNA-RuvA(4)-RuvB(12)-RuvC(2) complex forms which resolves the HJ.

The protein resides in the cytoplasm. In terms of biological role, the RuvA-RuvB-RuvC complex processes Holliday junction (HJ) DNA during genetic recombination and DNA repair, while the RuvA-RuvB complex plays an important role in the rescue of blocked DNA replication forks via replication fork reversal (RFR). RuvA specifically binds to HJ cruciform DNA, conferring on it an open structure. The RuvB hexamer acts as an ATP-dependent pump, pulling dsDNA into and through the RuvAB complex. HJ branch migration allows RuvC to scan DNA until it finds its consensus sequence, where it cleaves and resolves the cruciform DNA. This Staphylococcus haemolyticus (strain JCSC1435) protein is Holliday junction branch migration complex subunit RuvA.